Reading from the N-terminus, the 353-residue chain is Guanidino acid hydrolase, mitochondrial (353 aa).

Residues 1–33 (MLQLLKSSWVRSAGSGVVTWRASAGLFCPGTRQ) constitute a mitochondrion transit peptide. The disordered stretch occupies residues 29–52 (PGTRQASDTSDTLHHPSPSSESQV). The Mn(2+) site is built by His163 and His188. Lys194 bears the N6-acetyllysine mark. At Lys218 the chain carries N6-acetyllysine; alternate. The residue at position 218 (Lys218) is an N6-succinyllysine; alternate. Mn(2+) is bound at residue Asp279.

It belongs to the arginase family. Agmatinase subfamily. Requires Mn(2+) as cofactor.

It is found in the mitochondrion. It catalyses the reaction 3-guanidinopropanoate + H2O = urea + beta-alanine. It carries out the reaction 4-guanidinobutanoate + H2O = urea + 4-aminobutanoate. The catalysed reaction is taurocyamine + H2O = urea + taurine. The enzyme catalyses L-arginine + H2O = urea + L-ornithine. It functions in the pathway nitrogen metabolism; urea cycle; L-ornithine and urea from L-arginine: step 1/1. Its function is as follows. Hydrolyzes linear guanidino acids to form urea and the corresponding amines. Displays specificity for substrates having a negatively charged head group and short chains including taurocyamine, guanidino propanoic and butanoic acids. May protect cells by detoxifying potentially harmful amounts of guanidino acids. Metabolizes L-arginine with low efficiency. In Rattus norvegicus (Rat), this protein is Guanidino acid hydrolase, mitochondrial (Agmat).